The primary structure comprises 154 residues: Protein X (154 aa).

The tract at residues Pro-68 to Phe-117 is mitochondrial targeting sequence.

This sequence belongs to the orthohepadnavirus protein X family. As to quaternary structure, may form homodimer. May interact with host CEBPA, CFLAR, CREB1, DDB1, E4F1, HBXIP, HSPD1/HSP60, NFKBIA, POLR2E and SMAD4. Interacts with host SMC5-SMC6 complex and induces its degradation. Interacts with host TRPC4AP; leading to prevent ubiquitination of TRPC4AP. Interacts with host PLSCR1; this interaction promotes ubiquitination and degradation of HBx and impairs HBx-mediated cell proliferation. A fraction may be phosphorylated in insect cells and HepG2 cells, a human hepatoblastoma cell line. Phosphorylated in vitro by host protein kinase C or mitogen-activated protein kinase. N-acetylated in insect cells.

It is found in the host cytoplasm. It localises to the host nucleus. The protein localises to the host mitochondrion. Multifunctional protein that plays a role in silencing host antiviral defenses and promoting viral transcription. Does not seem to be essential for HBV infection. May be directly involved in development of cirrhosis and liver cancer (hepatocellular carcinoma). Most of cytosolic activities involve modulation of cytosolic calcium. The effect on apoptosis is controversial depending on the cell types in which the studies have been conducted. May induce apoptosis by localizing in mitochondria and causing loss of mitochondrial membrane potential. May also modulate apoptosis by binding host CFLAR, a key regulator of the death-inducing signaling complex (DISC). Promotes viral transcription by using the host E3 ubiquitin ligase DDB1 to target the SMC5-SMC6 complex to proteasomal degradation. This host complex would otherwise bind to viral episomal DNA, and prevents its transcription. Moderately stimulates transcription of many different viral and cellular transcription elements. Promoters and enhancers stimulated by HBx contain DNA binding sites for NF-kappa-B, AP-1, AP-2, c-EBP, ATF/CREB, or the calcium-activated factor NF-AT. This chain is Protein X, found in Hepatitis B virus genotype C subtype adr (strain Japan/adr4/1983) (HBV-C).